The chain runs to 194 residues: Ancillary SecYEG translocon subunit (194 aa).

The Cytoplasmic segment spans residues 1-10 (MHLNKMKKVS). The chain crosses the membrane as a helical span at residues 11–31 (LKTYLVLFFLIFFIFCSFWFI). Over 32–194 (KPKEKKLKLE…INMKINEIKR (163 aa)) the chain is Periplasmic.

This sequence belongs to the YfgM family. As to quaternary structure, interacts with the SecYEG translocon. Forms a complex with PpiD.

The protein localises to the cell inner membrane. In terms of biological role, may mediate protein transfer from the SecYEG translocon to the periplasmic chaperone network via its periplasmic C-terminal region. This is Ancillary SecYEG translocon subunit from Buchnera aphidicola subsp. Schizaphis graminum (strain Sg).